The primary structure comprises 448 residues: GTPase Der (448 aa).

EngA-type G domains are found at residues 2-171 (FTVV…PDTQ) and 181-364 (PKIA…EEYS). GTP contacts are provided by residues 8–15 (GRPNVGKS), 58–62 (DTGGF), 123–126 (NKID), 187–194 (GRPNVGKS), 234–238 (DTAGI), and 305–308 (NKWD). The 84-residue stretch at 365–448 (KRVSTSELNR…PINIKIKQRK (84 aa)) folds into the KH-like domain.

Belongs to the TRAFAC class TrmE-Era-EngA-EngB-Septin-like GTPase superfamily. EngA (Der) GTPase family. In terms of assembly, associates with the 50S ribosomal subunit.

In terms of biological role, GTPase that plays an essential role in the late steps of ribosome biogenesis. This is GTPase Der from Thermodesulfovibrio yellowstonii (strain ATCC 51303 / DSM 11347 / YP87).